A 461-amino-acid polypeptide reads, in one-letter code: Ribitol-5-phosphate transferase FKTN (461 aa).

Over 1 to 7 (MSRINKN) the chain is Cytoplasmic. Residues 6–27 (KNVVLALLTLTSSAFLLFQLYY) form a required and sufficient for interaction with POMGNT1 region. Residues 8–28 (VVLALLTLTSSAFLLFQLYYY) form a helical; Signal-anchor for type II membrane protein membrane-spanning segment. Residues 29 to 461 (KHYLSARNGP…SEWDEVIQLY (433 aa)) lie on the Lumenal side of the membrane. The N-linked (GlcNAc...) asparagine glycan is linked to Asn92.

Belongs to the LicD transferase family. As to quaternary structure, forms a complex composed of FKTN/fukutin, FKRP and RXYLT1/TMEM5. Interacts (via transmembrane domain) with POMGNT1; the interaction is direct and is required for normal POMGNT1 location in Golgi membranes. Expressed in the retina, with highest levels found in the inner segments of photoreceptors and the outer plexiform layer (at protein level). Expressed at lower levels in the inner and outer nuclear layers, the inner plexiform layers, and the ganglion cell layers of the retina (at protein level). Expressed in the heart, brain, spleen, lung, liver, skeletal muscle, kidney and testis.

Its subcellular location is the golgi apparatus membrane. It is found in the cytoplasm. The protein resides in the nucleus. The protein localises to the endoplasmic reticulum. The enzyme catalyses 3-O-[beta-D-GalNAc-(1-&gt;3)-beta-D-GlcNAc-(1-&gt;4)-(O-6-P-alpha-D-Man)]-Thr-[protein] + CDP-L-ribitol = 3-O-[Rib-ol-P-3-beta-D-GalNAc-(1-&gt;3)-beta-D-GlcNAc-(1-&gt;4)-(O-6-P-alpha-D-Man)]-Thr-[protein] + CMP + H(+). It functions in the pathway protein modification; protein glycosylation. Its function is as follows. Catalyzes the transfer of CDP-ribitol to the distal N-acetylgalactosamine of the phosphorylated O-mannosyl trisaccharide (N-acetylgalactosamine-beta-3-N-acetylglucosamine-beta-4-(phosphate-6-)mannose), a carbohydrate structure present in alpha-dystroglycan (DAG1). This constitutes the first step in the formation of the ribitol 5-phosphate tandem repeat which links the phosphorylated O-mannosyl trisaccharide to the ligand binding moiety composed of repeats of 3-xylosyl-alpha-1,3-glucuronic acid-beta-1. Required for normal location of POMGNT1 in Golgi membranes, and for normal POMGNT1 activity. May interact with and reinforce a large complex encompassing the outside and inside of muscle membranes. Could be involved in brain development. The protein is Ribitol-5-phosphate transferase FKTN of Mus musculus (Mouse).